The following is a 285-amino-acid chain: Protoheme IX farnesyltransferase (285 aa).

Helical transmembrane passes span 8-28 (ITKP…FLFA), 36-56 (YVLF…ACVF), 80-100 (LLPV…GLSI), 107-127 (FISM…YTMF), 133-153 (FYST…GYTA), 163-183 (ILLF…ISIM), 209-229 (IFFY…LGYL), 232-252 (NFLL…YSNI), and 265-285 (FYFS…DVFF).

It belongs to the UbiA prenyltransferase family. Protoheme IX farnesyltransferase subfamily.

The protein localises to the cell membrane. It carries out the reaction heme b + (2E,6E)-farnesyl diphosphate + H2O = Fe(II)-heme o + diphosphate. It participates in porphyrin-containing compound metabolism; heme O biosynthesis; heme O from protoheme: step 1/1. Converts heme B (protoheme IX) to heme O by substitution of the vinyl group on carbon 2 of heme B porphyrin ring with a hydroxyethyl farnesyl side group. In Buchnera aphidicola subsp. Acyrthosiphon pisum (strain Tuc7), this protein is Protoheme IX farnesyltransferase.